A 21-amino-acid chain; its full sequence is GKFLHSAGKFGKAFLGEVMIG.

As to expression, expressed by the skin glands.

It localises to the secreted. Functionally, has no antimicrobial activity against tested bacteria. The protein is Magainin-B1 of Xenopus borealis (Kenyan clawed frog).